The primary structure comprises 187 residues: Cytochrome b-245 chaperone 1 (187 aa).

Residues 20-42 (GIRSWSLLVGILSIGLAAAYYSG) traverse the membrane as a helical segment. Ser-168 bears the Phosphoserine mark.

Belongs to the CYBC1 family. Interacts with CYBB; CYBC1 may act as a chaperone stabilizing Cytochrome b-245 heterodimer. In terms of tissue distribution, highly expressed in macrophages, neutrophils and monocytes.

It localises to the endoplasmic reticulum membrane. In terms of biological role, functions as a chaperone necessary for a stable expression of the CYBA and CYBB subunits of the cytochrome b-245 heterodimer. Controls the phagocyte respiratory burst and is essential for innate immunity. The protein is Cytochrome b-245 chaperone 1 of Homo sapiens (Human).